A 275-amino-acid polypeptide reads, in one-letter code: Lincomycin biosynthesis protein LmbN (275 aa).

Residues 1-78 (MSTLDEVLAL…AIAATVARIT (78 aa)) enclose the Carrier domain. At Ser-37 the chain carries O-(pantetheine 4'-phosphoryl)serine. The SIS domain occupies 113–275 (LFDTWHAGGT…HHALCVAHAP (163 aa)).

It participates in antibiotic biosynthesis; lincomycin biosynthesis. The protein is Lincomycin biosynthesis protein LmbN (lmbN) of Streptomyces lincolnensis.